A 572-amino-acid chain; its full sequence is Proline--tRNA ligase (572 aa).

It belongs to the class-II aminoacyl-tRNA synthetase family. ProS type 1 subfamily. In terms of assembly, homodimer.

The protein resides in the cytoplasm. The enzyme catalyses tRNA(Pro) + L-proline + ATP = L-prolyl-tRNA(Pro) + AMP + diphosphate. Its function is as follows. Catalyzes the attachment of proline to tRNA(Pro) in a two-step reaction: proline is first activated by ATP to form Pro-AMP and then transferred to the acceptor end of tRNA(Pro). As ProRS can inadvertently accommodate and process non-cognate amino acids such as alanine and cysteine, to avoid such errors it has two additional distinct editing activities against alanine. One activity is designated as 'pretransfer' editing and involves the tRNA(Pro)-independent hydrolysis of activated Ala-AMP. The other activity is designated 'posttransfer' editing and involves deacylation of mischarged Ala-tRNA(Pro). The misacylated Cys-tRNA(Pro) is not edited by ProRS. The sequence is that of Proline--tRNA ligase from Psychrobacter cryohalolentis (strain ATCC BAA-1226 / DSM 17306 / VKM B-2378 / K5).